A 287-amino-acid chain; its full sequence is Isopentenyl-diphosphate Delta-isomerase I (287 aa).

The Nudix hydrolase domain maps to 105-257 (LLHRAFSVFL…GVKLSPWFRL (153 aa)). Catalysis depends on residues cysteine 142 and tyrosine 207.

The protein belongs to the IPP isomerase type 1 family.

The catalysed reaction is isopentenyl diphosphate = dimethylallyl diphosphate. The protein operates within isoprenoid biosynthesis; dimethylallyl diphosphate biosynthesis; dimethylallyl diphosphate from isopentenyl diphosphate: step 1/1. It functions in the pathway porphyrin-containing compound metabolism; chlorophyll biosynthesis. Its function is as follows. Catalyzes the 1,3-allylic rearrangement of the homoallylic substrate isopentenyl (IPP) to its highly electrophilic allylic isomer, dimethylallyl diphosphate (DMAPP). The sequence is that of Isopentenyl-diphosphate Delta-isomerase I (IPI1) from Clarkia breweri (Fairy fans).